The primary structure comprises 476 residues: tRNA(Ile)-lysidine synthase (476 aa).

Residue 30–35 (SGGPDS) participates in ATP binding.

This sequence belongs to the tRNA(Ile)-lysidine synthase family.

Its subcellular location is the cytoplasm. The enzyme catalyses cytidine(34) in tRNA(Ile2) + L-lysine + ATP = lysidine(34) in tRNA(Ile2) + AMP + diphosphate + H(+). Its function is as follows. Ligates lysine onto the cytidine present at position 34 of the AUA codon-specific tRNA(Ile) that contains the anticodon CAU, in an ATP-dependent manner. Cytidine is converted to lysidine, thus changing the amino acid specificity of the tRNA from methionine to isoleucine. The polypeptide is tRNA(Ile)-lysidine synthase (Bacillus thuringiensis subsp. konkukian (strain 97-27)).